The sequence spans 418 residues: Tubulin alpha chain (418 aa).

Q11, E71, S140, G144, T179, N206, and N228 together coordinate GTP. A Mg(2+)-binding site is contributed by E71. E255 is a catalytic residue.

Belongs to the tubulin family. Dimer of alpha and beta chains. A typical microtubule is a hollow water-filled tube with an outer diameter of 25 nm and an inner diameter of 15 nM. Alpha-beta heterodimers associate head-to-tail to form protofilaments running lengthwise along the microtubule wall with the beta-tubulin subunit facing the microtubule plus end conferring a structural polarity. Microtubules usually have 13 protofilaments but different protofilament numbers can be found in some organisms and specialized cells. The cofactor is Mg(2+).

It localises to the cytoplasm. The protein resides in the cytoskeleton. It carries out the reaction GTP + H2O = GDP + phosphate + H(+). Its function is as follows. Tubulin is the major constituent of microtubules, a cylinder consisting of laterally associated linear protofilaments composed of alpha- and beta-tubulin heterodimers. Microtubules grow by the addition of GTP-tubulin dimers to the microtubule end, where a stabilizing cap forms. Below the cap, tubulin dimers are in GDP-bound state, owing to GTPase activity of alpha-tubulin. This chain is Tubulin alpha chain (TUB1), found in Ajellomyces capsulatus (Darling's disease fungus).